Consider the following 299-residue polypeptide: ATP phosphoribosyltransferase (299 aa).

It belongs to the ATP phosphoribosyltransferase family. Long subfamily. As to quaternary structure, equilibrium between an active dimeric form, an inactive hexameric form and higher aggregates. Interconversion between the various forms is largely reversible and is influenced by the natural substrates and inhibitors of the enzyme. The cofactor is Mg(2+).

It is found in the cytoplasm. The enzyme catalyses 1-(5-phospho-beta-D-ribosyl)-ATP + diphosphate = 5-phospho-alpha-D-ribose 1-diphosphate + ATP. Its pathway is amino-acid biosynthesis; L-histidine biosynthesis; L-histidine from 5-phospho-alpha-D-ribose 1-diphosphate: step 1/9. With respect to regulation, feedback inhibited by histidine. In terms of biological role, catalyzes the condensation of ATP and 5-phosphoribose 1-diphosphate to form N'-(5'-phosphoribosyl)-ATP (PR-ATP). Has a crucial role in the pathway because the rate of histidine biosynthesis seems to be controlled primarily by regulation of HisG enzymatic activity. This chain is ATP phosphoribosyltransferase, found in Buchnera aphidicola subsp. Schlechtendalia chinensis.